Reading from the N-terminus, the 246-residue chain is uncharacterized protein (246 aa).

The first 24 residues, 1–24 (MGAPLRHCLLVAAALSLGCGVAAA), serve as a signal peptide directing secretion. Helical transmembrane passes span 71 to 91 (YYLGSISGKKVIVAMTGIGLV) and 104 to 124 (FTCASSIAIAAVMFSGVAGGA).

It localises to the cell membrane. This is an uncharacterized protein from Mycobacterium tuberculosis (strain ATCC 25618 / H37Rv).